Reading from the N-terminus, the 60-residue chain is DNA gyrase inhibitor YacG (60 aa).

Zn(2+) contacts are provided by Cys3, Cys6, Cys18, and Cys22. The interval 38–60 is disordered; that stretch reads PASSEDEEEPLDQEAETPVAPRH. Residues 41 to 52 are compositionally biased toward acidic residues; it reads SEDEEEPLDQEA.

The protein belongs to the DNA gyrase inhibitor YacG family. Interacts with GyrB. Zn(2+) is required as a cofactor.

Inhibits all the catalytic activities of DNA gyrase by preventing its interaction with DNA. Acts by binding directly to the C-terminal domain of GyrB, which probably disrupts DNA binding by the gyrase. The sequence is that of DNA gyrase inhibitor YacG from Ruegeria pomeroyi (strain ATCC 700808 / DSM 15171 / DSS-3) (Silicibacter pomeroyi).